Consider the following 793-residue polypeptide: Tripartite terminase subunit 1 (793 aa).

The C3H1-type zinc-finger motif lies at 206 to 234 (CSVCFEELCVTANSGDSTHKRIVRKICDH). 697–704 (FSSVFKCG) contributes to the ATP binding site.

The protein belongs to the herpesviridae TRM1 protein family. In terms of assembly, associates with TRM2 and TRM3 to form the tripartite terminase complex. Interacts with portal protein.

Its subcellular location is the host nucleus. Its function is as follows. Component of the molecular motor that translocates viral genomic DNA in empty capsid during DNA packaging. Forms a tripartite terminase complex together with TRM2 and TRM3 in the host cytoplasm. Once the complex reaches the host nucleus, it interacts with the capsid portal vertex. This portal forms a ring in which genomic DNA is translocated into the capsid. TRM1 carries an endonuclease activity that plays an important role for the cleavage of concatemeric viral DNA into unit length genomes. This is Tripartite terminase subunit 1 from Gallid herpesvirus 2 (strain Chicken/Md5/ATCC VR-987) (GaHV-2).